The following is an 863-amino-acid chain: DNA replication licensing factor mcm4-B (863 aa).

The segment at 1–130 (MSSPTSTPSR…ARKVKQVDLH (130 aa)) is disordered. Polar residues-rich tracts occupy residues 54–64 (SPSGDVQSPSG) and 84–99 (LDLSSPLTYGTPSSRV). Residues 306–331 (CQVCAFTTRVEIDRGRIAEPSVCKHC) form a C4-type zinc finger. Residues 458–667 (IYERLAAALA…YDRRLAHHLV (210 aa)) form the MCM domain. 8 residues coordinate ATP: Tyr-471, Arg-497, Lys-516, Ser-517, Asn-618, Arg-643, Arg-732, and Glu-735. Positions 642–645 (SRFD) match the Arginine finger motif.

Belongs to the MCM family. In terms of assembly, component of the mcm2-7 complex (RLF-M). The complex forms a toroidal hexameric ring with the proposed subunit order mcm2-mcm6-mcm4-mcm7-mcm3-mcm5. The heterodimer of mmcm3/mcm5 interacts with mcm4, mmcm6, mcm7 and weakly with mcm2. Begins to associate with zmcm6 at the neurula stage. Component of the CMG helicase complex, composed of the mcm2-7 complex, the GINS complex and cdc45. Hyperphosphorylated during mitosis in a mechanism requiring cdc2-cyclin B and other kinases. Undergoes dephosphorylation after exiting mitosis, existing in a partially phosphorylated state in the cytosolic interphase mcm complex which associates with the pre-replication complexes (pre-Rcs). Complete dephosphorylation inactivates the mcm complex, preventing its binding to chromatin. Becomes actively phosphorylated during S phase once the mcm complex is assembled on the chromatin. This chromatin-associated phosphorylation occurs during the activation of the pre-Rcs and is independent of cdks. Phosphorylated by the cdc7-dbf4b complex.

It is found in the nucleus. The protein resides in the chromosome. It catalyses the reaction ATP + H2O = ADP + phosphate + H(+). Functionally, acts as a component of the MCM2-7 complex (MCM complex) which is the replicative helicase essential for 'once per cell cycle' DNA replication initiation and elongation in eukaryotic cells. Core component of CDC45-MCM-GINS (CMG) helicase, the molecular machine that unwinds template DNA during replication, and around which the replisome is built. The active ATPase sites in the MCM2-7 ring are formed through the interaction surfaces of two neighboring subunits such that a critical structure of a conserved arginine finger motif is provided in trans relative to the ATP-binding site of the Walker A box of the adjacent subunit. The six ATPase active sites, however, are likely to contribute differentially to the complex helicase activity. The sequence is that of DNA replication licensing factor mcm4-B (mcm4-b) from Xenopus laevis (African clawed frog).